Consider the following 438-residue polypeptide: Mitochondrial distribution and morphology protein 12 (438 aa).

The 438-residue stretch at 1 to 438 (MSIEVDWAAA…VYPSFWTFLV (438 aa)) folds into the SMP-LTD domain. Disordered regions lie at residues 110–154 (SFSH…TSTL), 185–277 (SDSG…MRER), and 353–379 (GSEQSQGSQNPSDDGRPRSGGDQKDKE). The span at 212 to 226 (DTTNSTSRPSTANTL) shows a compositional bias: polar residues. The segment covering 227–245 (PSHPSLGHSGSSGSNPHTS) has biased composition (low complexity). Over residues 354–364 (SEQSQGSQNPS) the composition is skewed to polar residues. Residues 365–379 (DDGRPRSGGDQKDKE) show a composition bias toward basic and acidic residues.

Belongs to the MDM12 family. Component of the ER-mitochondria encounter structure (ERMES) or MDM complex, composed of mmm1, mdm10, mdm12 and mdm34. A mmm1 homodimer associates with one molecule of mdm12 on each side in a pairwise head-to-tail manner, and the SMP-LTD domains of mmm1 and mdm12 generate a continuous hydrophobic tunnel for phospholipid trafficking.

Its subcellular location is the mitochondrion outer membrane. The protein localises to the endoplasmic reticulum membrane. In terms of biological role, component of the ERMES/MDM complex, which serves as a molecular tether to connect the endoplasmic reticulum (ER) and mitochondria. Components of this complex are involved in the control of mitochondrial shape and protein biogenesis, and function in nonvesicular lipid trafficking between the ER and mitochondria. Mdm12 is required for the interaction of the ER-resident membrane protein mmm1 and the outer mitochondrial membrane-resident beta-barrel protein mdm10. The mdm12-mmm1 subcomplex functions in the major beta-barrel assembly pathway that is responsible for biogenesis of all mitochondrial outer membrane beta-barrel proteins, and acts in a late step after the SAM complex. The mdm10-mdm12-mmm1 subcomplex further acts in the TOM40-specific pathway after the action of the mdm12-mmm1 complex. Essential for establishing and maintaining the structure of mitochondria and maintenance of mtDNA nucleoids. This is Mitochondrial distribution and morphology protein 12 from Penicillium rubens (strain ATCC 28089 / DSM 1075 / NRRL 1951 / Wisconsin 54-1255) (Penicillium chrysogenum).